A 271-amino-acid polypeptide reads, in one-letter code: Type III pantothenate kinase (271 aa).

6–13 serves as a coordination point for ATP; the sequence is DVRNTHTV. Residue 109-112 coordinates substrate; sequence GADR. Residue Asp111 is the Proton acceptor of the active site. Asp131 contributes to the K(+) binding site. ATP is bound at residue Ser134. Thr186 serves as a coordination point for substrate.

It belongs to the type III pantothenate kinase family. Homodimer. NH4(+) is required as a cofactor. Requires K(+) as cofactor.

It is found in the cytoplasm. It carries out the reaction (R)-pantothenate + ATP = (R)-4'-phosphopantothenate + ADP + H(+). It participates in cofactor biosynthesis; coenzyme A biosynthesis; CoA from (R)-pantothenate: step 1/5. Catalyzes the phosphorylation of pantothenate (Pan), the first step in CoA biosynthesis. This Mycobacterium avium (strain 104) protein is Type III pantothenate kinase.